The primary structure comprises 284 residues: ATP phosphoribosyltransferase (284 aa).

Belongs to the ATP phosphoribosyltransferase family. Long subfamily. Equilibrium between an active dimeric form, an inactive hexameric form and higher aggregates. Interconversion between the various forms is largely reversible and is influenced by the natural substrates and inhibitors of the enzyme. Mg(2+) serves as cofactor.

The protein resides in the cytoplasm. The catalysed reaction is 1-(5-phospho-beta-D-ribosyl)-ATP + diphosphate = 5-phospho-alpha-D-ribose 1-diphosphate + ATP. It functions in the pathway amino-acid biosynthesis; L-histidine biosynthesis; L-histidine from 5-phospho-alpha-D-ribose 1-diphosphate: step 1/9. With respect to regulation, feedback inhibited by histidine. In terms of biological role, catalyzes the condensation of ATP and 5-phosphoribose 1-diphosphate to form N'-(5'-phosphoribosyl)-ATP (PR-ATP). Has a crucial role in the pathway because the rate of histidine biosynthesis seems to be controlled primarily by regulation of HisG enzymatic activity. The protein is ATP phosphoribosyltransferase (hisG) of Mycobacterium bovis (strain ATCC BAA-935 / AF2122/97).